Consider the following 170-residue polypeptide: ATP synthase F(1) complex subunit delta, mitochondrial (170 aa).

A mitochondrion-targeting transit peptide spans Met1 to Thr33.

The protein belongs to the ATPase epsilon chain family. Component of the ATP synthase complex composed at least of ATP5F1A/subunit alpha, ATP5F1B/subunit beta, ATP5MC1/subunit c (homooctomer), MT-ATP6/subunit a, MT-ATP8/subunit 8, ATP5ME/subunit e, ATP5MF/subunit f, ATP5MG/subunit g, ATP5MK/subunit k, ATP5MJ/subunit j, ATP5F1C/subunit gamma, ATP5F1D/subunit delta, ATP5F1E/subunit epsilon, ATP5PF/subunit F6, ATP5PB/subunit b, ATP5PD/subunit d, ATP5PO/subunit OSCP. ATP synthase complex consists of a soluble F(1) head domain (subunits alpha(3) and beta(3)) - the catalytic core - and a membrane F(0) domain - the membrane proton channel (subunits c, a, 8, e, f, g, k and j). These two domains are linked by a central stalk (subunits gamma, delta, and epsilon) rotating inside the F1 region and a stationary peripheral stalk (subunits F6, b, d, and OSCP).

It is found in the mitochondrion. It localises to the mitochondrion inner membrane. In terms of biological role, subunit delta, of the mitochondrial membrane ATP synthase complex (F(1)F(0) ATP synthase or Complex V) that produces ATP from ADP in the presence of a proton gradient across the membrane which is generated by electron transport complexes of the respiratory chain. ATP synthase complex consist of a soluble F(1) head domain - the catalytic core - and a membrane F(1) domain - the membrane proton channel. These two domains are linked by a central stalk rotating inside the F(1) region and a stationary peripheral stalk. During catalysis, ATP synthesis in the catalytic domain of F(1) is coupled via a rotary mechanism of the central stalk subunits to proton translocation. In vivo, can only synthesize ATP although its ATP hydrolase activity can be activated artificially in vitro. With the central stalk subunit gamma, is essential for the biogenesis of F(1) catalytic part of the ATP synthase complex namely in the formation of F1 assembly intermediate. The sequence is that of ATP synthase F(1) complex subunit delta, mitochondrial from Dictyostelium discoideum (Social amoeba).